Consider the following 334-residue polypeptide: Nucleoid-associated protein SG1574 (334 aa).

It belongs to the YejK family.

It localises to the cytoplasm. The protein localises to the nucleoid. This chain is Nucleoid-associated protein SG1574, found in Sodalis glossinidius (strain morsitans).